The chain runs to 186 residues: MAALTDVQRLQSRVEELERWVYGPGGTRGSRKVADGLVKVQVALGNIASKRERVKILYKKIEDLIKYLDPEYIDRIAIPEASKLQFILAEEQFILSQVALLEQVNALVPVLDSASIKAVPEHAARLQRLAQIHIQQQDQCVAITEESKALLEGYNKTTMLLSKQFVQWDELLCQLEAAKQVKPAEE.

Alanine 2 carries the N-acetylalanine modification. The stretch at 46–66 (NIASKRERVKILYKKIEDLIK) forms a coiled coil.

Belongs to the dynactin subunit 3 family. In terms of assembly, subunit of dynactin, a multiprotein complex part of a tripartite complex with dynein and a adapter, such as BICDL1, BICD2 or HOOK3. The dynactin complex is built around ACTR1A/ACTB filament and consists of an actin-related filament composed of a shoulder domain, a pointed end and a barbed end. Its length is defined by its flexible shoulder domain. The soulder is composed of 2 DCTN1 subunits, 4 DCTN2 and 2 DCTN3. The 4 DCNT2 (via N-terminus) bind the ACTR1A filament and act as molecular rulers to determine the length. The pointed end is important for binding dynein-dynactin cargo adapters. Consists of 4 subunits: ACTR10, DCNT4, DCTN5 and DCTN6. The barbed end is composed of a CAPZA1:CAPZB heterodimers, which binds ACTR1A/ACTB filament and dynactin and stabilizes dynactin.

The protein resides in the cytoplasm. Its subcellular location is the cytoskeleton. It localises to the microtubule organizing center. The protein localises to the centrosome. It is found in the chromosome. The protein resides in the centromere. Its subcellular location is the kinetochore. It localises to the spindle. The protein localises to the cleavage furrow. It is found in the midbody. Its function is as follows. Part of the dynactin complex that activates the molecular motor dynein for ultra-processive transport along microtubules. Together with dynein may be involved in spindle assembly and cytokinesis. This chain is Dynactin subunit 3, found in Mus musculus (Mouse).